The following is a 509-amino-acid chain: Transmembrane protein 102 (509 aa).

Residues 1–312 (MASTVWGGAP…VLLATPEPPR (312 aa)) lie on the Extracellular side of the membrane. Residues 167–236 (PPVPEESDMT…NPETPEPLET (70 aa)) are disordered. Residues 174 to 204 (DMTHQTHSKESPTDRENSVDPSHDYVPEPEP) are compositionally biased toward basic and acidic residues. A compositionally biased stretch (low complexity) spans 207 to 224 (SLQKSSSDLSESQSSYKD). Residues 313 to 329 (HLLLFDLIPVVTVTGWP) traverse the membrane as a helical segment. Residues 330-509 (DTARSHSWAG…GLAGVGGGTH (180 aa)) lie on the Cytoplasmic side of the membrane.

As to quaternary structure, interacts with CSF2RB; this interaction occurs preferentially in the absence of CSF2.

It is found in the cell membrane. In terms of biological role, selectively involved in CSF2 deprivation-induced apoptosis via a mitochondria-dependent pathway. This chain is Transmembrane protein 102 (Tmem102), found in Mus musculus (Mouse).